A 72-amino-acid polypeptide reads, in one-letter code: DNA gyrase inhibitor YacG (72 aa).

The Zn(2+) site is built by Cys-17, Cys-20, Cys-32, and Cys-36. Positions 52-72 are disordered; it reads PGPEEDEMSYPPHSNDGNRSR.

The protein belongs to the DNA gyrase inhibitor YacG family. In terms of assembly, interacts with GyrB. Zn(2+) serves as cofactor.

In terms of biological role, inhibits all the catalytic activities of DNA gyrase by preventing its interaction with DNA. Acts by binding directly to the C-terminal domain of GyrB, which probably disrupts DNA binding by the gyrase. In Methylorubrum extorquens (strain CM4 / NCIMB 13688) (Methylobacterium extorquens), this protein is DNA gyrase inhibitor YacG.